The sequence spans 227 residues: MKISCLICLVIVLTIIHLSQANDYCKIKCSSGVHTVCQYGESTKPSKNCAGKLIKSVGPTEEEKKLIVEEHNRFRQKVAKGLETRGNPGPQPAASNMNNLVWNDELAKIAQVWASQCQILVHDKCRNTEKYQVGQNIAYAGSSNHFPSVTKLIQLWENEVKDFNYNTGITNKNFGKVGHYTQMVWGNTKEVGCGSLKYVEKNMQIHYLICNYGPAGNYLGQPIYTKK.

An N-terminal signal peptide occupies residues 1 to 21 (MKISCLICLVIVLTIIHLSQA). 4 disulfides stabilise this stretch: cysteine 25-cysteine 37, cysteine 29-cysteine 125, cysteine 49-cysteine 117, and cysteine 193-cysteine 210. An SCP domain is found at 69–212 (EEHNRFRQKV…MQIHYLICNY (144 aa)).

Belongs to the CRISP family. Venom allergen 5-like subfamily. As to expression, expressed by the venom gland.

The protein resides in the secreted. In Polistes dominula (European paper wasp), this protein is Venom allergen 5.